A 347-amino-acid chain; its full sequence is Eukaryotic translation initiation factor 3 subunit I (347 aa).

WD repeat units follow at residues 8–49 (GHER…GTLD), 51–89 (HMGS…CVQT), 149–190 (THEG…KLVE), 194–233 (VHKD…VLKT), and 291–330 (GHFG…FDFK).

It belongs to the eIF-3 subunit I family. In terms of assembly, component of the eukaryotic translation initiation factor 3 (eIF-3) complex.

The protein localises to the cytoplasm. Component of the eukaryotic translation initiation factor 3 (eIF-3) complex, which is involved in protein synthesis of a specialized repertoire of mRNAs and, together with other initiation factors, stimulates binding of mRNA and methionyl-tRNAi to the 40S ribosome. The eIF-3 complex specifically targets and initiates translation of a subset of mRNAs involved in cell proliferation. The polypeptide is Eukaryotic translation initiation factor 3 subunit I (Candida glabrata (strain ATCC 2001 / BCRC 20586 / JCM 3761 / NBRC 0622 / NRRL Y-65 / CBS 138) (Yeast)).